Consider the following 20-residue polypeptide: Antiviral protein Y3 (20 aa).

This chain is Antiviral protein Y3, found in Pleurotus citrinopileatus (Golden oyster mushroom).